Reading from the N-terminus, the 202-residue chain is Ribosome maturation factor RimP (202 aa).

Belongs to the RimP family.

Its subcellular location is the cytoplasm. Required for maturation of 30S ribosomal subunits. The polypeptide is Ribosome maturation factor RimP (Paracidovorax citrulli (strain AAC00-1) (Acidovorax citrulli)).